The chain runs to 159 residues: MELPAVNLKVILLGHWLLTTWGCIVFSGSYAWANFTILALGVWAVAQRDSIDAISMFLGGLLATIFLDIVHISIFYPRVSLTDTGRFGVGMAILSLLLKPLSCCFVYHMYRERGGELLVHTGFLGSSQDRSAYQTIDSAEAPADPFAVPEGRSQDARGY.

The Extracellular segment spans residues 1–23 (MELPAVNLKVILLGHWLLTTWGC). The chain crosses the membrane as a helical span at residues 24 to 44 (IVFSGSYAWANFTILALGVWA). Over 45 to 55 (VAQRDSIDAIS) the chain is Cytoplasmic. The helical transmembrane segment at 56–76 (MFLGGLLATIFLDIVHISIFY) threads the bilayer. The Extracellular portion of the chain corresponds to 77–86 (PRVSLTDTGR). Residues 87 to 107 (FGVGMAILSLLLKPLSCCFVY) traverse the membrane as a helical segment. Over 108–159 (HMYRERGGELLVHTGFLGSSQDRSAYQTIDSAEAPADPFAVPEGRSQDARGY) the chain is Cytoplasmic. Residues 110–122 (YRERGGELLVHTG) are interaction with AGTR1. A phosphoserine mark is found at Ser126 and Ser127. Residue Thr135 is modified to Phosphothreonine. Residues Ser138 and Ser153 each carry the phosphoserine modification. Residues 140-159 (EAPADPFAVPEGRSQDARGY) are disordered.

In terms of assembly, interacts with RACK1, and with the C-terminal region of AGTR1. Ubiquitous but more abundant in kidney, heart, pancreas and thyroid.

It localises to the endoplasmic reticulum membrane. The protein resides in the golgi apparatus membrane. It is found in the cytoplasmic vesicle membrane. Its function is as follows. Appears to be a negative regulator of type-1 angiotensin II receptor-mediated signaling by regulating receptor internalization as well as mechanism of receptor desensitization such as phosphorylation. Also induces a decrease in cell proliferation and angiotensin II-stimulated transcriptional activity. The protein is Type-1 angiotensin II receptor-associated protein (AGTRAP) of Homo sapiens (Human).